The chain runs to 462 residues: UDP-N-acetylmuramate--L-alanine ligase (462 aa).

Residue 119 to 125 participates in ATP binding; it reads GTHGKTT.

This sequence belongs to the MurCDEF family.

The protein localises to the cytoplasm. The catalysed reaction is UDP-N-acetyl-alpha-D-muramate + L-alanine + ATP = UDP-N-acetyl-alpha-D-muramoyl-L-alanine + ADP + phosphate + H(+). It functions in the pathway cell wall biogenesis; peptidoglycan biosynthesis. Its function is as follows. Cell wall formation. The polypeptide is UDP-N-acetylmuramate--L-alanine ligase (Parabacteroides distasonis (strain ATCC 8503 / DSM 20701 / CIP 104284 / JCM 5825 / NCTC 11152)).